Here is a 392-residue protein sequence, read N- to C-terminus: 6-aminohexanoate-dimer hydrolase (392 aa).

The interval 1-22 is disordered; it reads MNARSTGQHPARYPGAAAGEPT. The active site involves Ser-112.

It catalyses the reaction [N-(6-aminohexanoyl)](n) + H2O = [N-(6-aminohexanoyl)](n-1) + 6-aminohexanoate. The catalysed reaction is N-(6-aminohexanoyl)-6-aminohexanoate + H2O = 2 6-aminohexanoate. The protein operates within xenobiotic degradation; nylon-6 oligomer degradation. Functionally, involved in nylon oligomer degradation. The sequence is that of 6-aminohexanoate-dimer hydrolase from Paenarthrobacter ureafaciens.